The sequence spans 335 residues: Zinc-type alcohol dehydrogenase-like protein SAR2277 (335 aa).

Belongs to the zinc-containing alcohol dehydrogenase family. Quinone oxidoreductase subfamily.

The chain is Zinc-type alcohol dehydrogenase-like protein SAR2277 from Staphylococcus aureus (strain MRSA252).